The sequence spans 334 residues: Tryptophan--tRNA ligase (334 aa).

ATP contacts are provided by residues 11–13 (QPS) and 19–20 (GN). Residues 12 to 20 (PSGELTIGN) carry the 'HIGH' region motif. Asp135 provides a ligand contact to L-tryptophan. ATP-binding positions include 147–149 (GED), Val186, and 195–199 (KMSKS). The 'KMSKS' region signature appears at 195 to 199 (KMSKS).

The protein belongs to the class-I aminoacyl-tRNA synthetase family. In terms of assembly, homodimer.

The protein resides in the cytoplasm. The enzyme catalyses tRNA(Trp) + L-tryptophan + ATP = L-tryptophyl-tRNA(Trp) + AMP + diphosphate + H(+). Catalyzes the attachment of tryptophan to tRNA(Trp). This is Tryptophan--tRNA ligase from Salmonella typhi.